The chain runs to 312 residues: Olfactory receptor 7G3 (312 aa).

Residues 1–25 (MKAGNFSDTPEFFLLGLSGDPELQP) are Extracellular-facing. The N-linked (GlcNAc...) asparagine glycan is linked to Asn-5. The chain crosses the membrane as a helical span at residues 26-46 (ILFMLFLSMYLATMLGNLLII). The Cytoplasmic segment spans residues 47–54 (LAVNSDSH). A helical transmembrane segment spans residues 55 to 75 (LHTPMYFLLSILSLVDICFTS). The Extracellular portion of the chain corresponds to 76–99 (TTMPKMLVNIQAQAQSINYTGCLT). A glycan (N-linked (GlcNAc...) asparagine) is linked at Asn-93. Cys-97 and Cys-189 are disulfide-bonded. The chain crosses the membrane as a helical span at residues 100–120 (QICFVLVFVGLENGILVMMAY). The Cytoplasmic segment spans residues 121–139 (DRFVAICHPLRYNVIMNPK). The helical transmembrane segment at 140-160 (LCGLLLLLSFIVSVLDALLHT) threads the bilayer. Residues 161–197 (LMVLQLTFCIDLEIPHFFCELAHILKLACSDVLINNI) are Extracellular-facing. Residues 198 to 217 (LVYLVTSLLGVVPLSGIIFS) form a helical membrane-spanning segment. Topologically, residues 218 to 237 (YTRIVSSVMKIPSAGGKYKA) are cytoplasmic. A helical transmembrane segment spans residues 238-258 (FSICGSHLIVVSLFYGTGFGV). The Extracellular portion of the chain corresponds to 259 to 271 (YLSSGATHSSRKG). Residues 272–292 (AIASVMYTVVTPMLNPLIYSL) traverse the membrane as a helical segment. Topologically, residues 293–312 (RNKDMLKALRKLISRIPSFH) are cytoplasmic.

This sequence belongs to the G-protein coupled receptor 1 family.

It is found in the cell membrane. Its function is as follows. Odorant receptor. The protein is Olfactory receptor 7G3 (OR7G3) of Homo sapiens (Human).